Reading from the N-terminus, the 156-residue chain is Cyanate hydratase (156 aa).

Catalysis depends on residues arginine 96, glutamate 99, and serine 122.

This sequence belongs to the cyanase family.

The catalysed reaction is cyanate + hydrogencarbonate + 3 H(+) = NH4(+) + 2 CO2. Its function is as follows. Catalyzes the reaction of cyanate with bicarbonate to produce ammonia and carbon dioxide. In Serratia proteamaculans (strain 568), this protein is Cyanate hydratase.